Reading from the N-terminus, the 432-residue chain is EF-hand calcium-binding domain-containing protein 3 (432 aa).

EF-hand domains lie at 45–80 (AQLE…LGMN) and 81–116 (LNTY…KKLF). Ca(2+) is bound by residues Asp-94, Asp-96, Asp-98, Lys-100, and Asp-105. Position 273 is a phosphotyrosine (Tyr-273). Residues 394-432 (SMNKSSPSNSGLSSPSDFSESDPETGRKRKRKSSRGFRQ) form a disordered region. The segment covering 395–411 (MNKSSPSNSGLSSPSDF) has biased composition (low complexity). Residues 420–432 (RKRKRKSSRGFRQ) show a composition bias toward basic residues.

The sequence is that of EF-hand calcium-binding domain-containing protein 3 (Efcab3) from Mus musculus (Mouse).